A 139-amino-acid polypeptide reads, in one-letter code: D-ribose pyranase (139 aa).

Catalysis depends on histidine 20, which acts as the Proton donor. Residues aspartate 28, histidine 106, and 128 to 130 (YAN) each bind substrate.

It belongs to the RbsD / FucU family. RbsD subfamily. As to quaternary structure, homodecamer.

It localises to the cytoplasm. The enzyme catalyses beta-D-ribopyranose = beta-D-ribofuranose. It participates in carbohydrate metabolism; D-ribose degradation; D-ribose 5-phosphate from beta-D-ribopyranose: step 1/2. Catalyzes the interconversion of beta-pyran and beta-furan forms of D-ribose. The sequence is that of D-ribose pyranase from Vibrio campbellii (strain ATCC BAA-1116).